Consider the following 152-residue polypeptide: Deoxyuridine 5'-triphosphate nucleotidohydrolase (152 aa).

Substrate is bound by residues 63 to 65 (RSG), asparagine 76, and 80 to 82 (TID). The segment at 129–152 (LDDTERGQGGYGSTGVSAMPPVDG) is disordered.

Belongs to the dUTPase family. The cofactor is Mg(2+).

It carries out the reaction dUTP + H2O = dUMP + diphosphate + H(+). The protein operates within pyrimidine metabolism; dUMP biosynthesis; dUMP from dCTP (dUTP route): step 2/2. Functionally, this enzyme is involved in nucleotide metabolism: it produces dUMP, the immediate precursor of thymidine nucleotides and it decreases the intracellular concentration of dUTP so that uracil cannot be incorporated into DNA. In Cutibacterium acnes (strain DSM 16379 / KPA171202) (Propionibacterium acnes), this protein is Deoxyuridine 5'-triphosphate nucleotidohydrolase.